The chain runs to 694 residues: NADPH--cytochrome P450 reductase (694 aa).

At 1–8 (MAQLDTLD) the chain is on the lumenal side. Residues 9-31 (LVVLAVLLVGSVAYFTKGTYWAV) traverse the membrane as a helical segment. Residues 32–694 (AKDPYASTGP…RGRYQEDVWS (663 aa)) lie on the Cytoplasmic side of the membrane. Positions 66–220 (CVIFYGSQTG…DFLAWKEPMW (155 aa)) constitute a Flavodoxin-like domain. Residues 72 to 77 (SQTGTA), 123 to 126 (ATYG), 168 to 177 (LGNNTYEHYN), and aspartate 203 each bind FMN. The region spanning 276–537 (HNPFIAPIAE…HVRHSNFKLP (262 aa)) is the FAD-binding FR-type domain. An NADP(+)-binding site is contributed by arginine 295. Residues 450-453 (RYYS), 468-470 (TAV), and 485-488 (GVTT) each bind FAD. Residues threonine 551, 613-614 (SR), 619-623 (KVYVQ), and glutamate 655 contribute to the NADP(+) site. Residue tryptophan 693 participates in FAD binding.

This sequence belongs to the NADPH--cytochrome P450 reductase family. In the N-terminal section; belongs to the flavodoxin family. The protein in the C-terminal section; belongs to the flavoprotein pyridine nucleotide cytochrome reductase family. The cofactor is FAD. FMN is required as a cofactor.

It localises to the endoplasmic reticulum membrane. The protein localises to the mitochondrion outer membrane. The protein resides in the cell membrane. It carries out the reaction 2 oxidized [cytochrome P450] + NADPH = 2 reduced [cytochrome P450] + NADP(+) + H(+). In terms of biological role, this enzyme is required for electron transfer from NADP to cytochrome P450 in microsomes. It can also provide electron transfer to heme oxygenase and cytochrome B5. Involved in ergosterol biosynthesis. In Aspergillus niger, this protein is NADPH--cytochrome P450 reductase.